The chain runs to 2340 residues: Proto-oncogene tyrosine-protein kinase ROS (2340 aa).

A signal peptide spans 1 to 28; sequence MKNICWLTLKLVKFVVLGCIIWISVAQS. The Extracellular segment spans residues 29-1854; sequence TVLSSCLTSC…EDGVWITETS (1826 aa). N53 carries N-linked (GlcNAc...) asparagine glycosylation. 2 consecutive Fibronectin type-III domains span residues 111-206 and 207-295; these read LPTA…VPET and APLI…PSPS. N-linked (GlcNAc...) asparagine glycosylation is found at N334 and N362. The Fibronectin type-III 3 domain maps to 567 to 667; the sequence is LPGHPQEVSV…APSVGTTLVP (101 aa). Residues N935 and N1011 are each glycosylated (N-linked (GlcNAc...) asparagine). Fibronectin type-III domains follow at residues 943 to 1038 and 1039 to 1146; these read IPDP…SVPS and APEN…TSEI. N1243 carries N-linked (GlcNAc...) asparagine glycosylation. Fibronectin type-III domains are found at residues 1442–1549, 1550–1649, 1651–1744, and 1745–1846; these read ASDM…TKSG, VPGA…VNMF, TPEK…TKAG, and VPSK…LVED. N-linked (GlcNAc...) asparagine glycosylation is present at N1676. The helical transmembrane segment at 1855 to 1875 threads the bilayer; sequence FILTIIVGIFLVATVPLTFVW. Residues 1876 to 2340 lie on the Cytoplasmic side of the membrane; it reads HRSLKSHKAS…AHSEHGDVSE (465 aa). The region spanning 1938-2216 is the Protein kinase domain; that stretch reads LSLRLLLGSG…QLQLFRNVFL (279 aa). Residues 1944 to 1952 and K1973 contribute to the ATP site; that span reads LGSGAFGEV. The active-site Proton acceptor is D2072. Phosphotyrosine; by autocatalysis occurs at positions 2267 and 2327.

It belongs to the protein kinase superfamily. Tyr protein kinase family. Insulin receptor subfamily. As to quaternary structure, interacts with PTPN11; may activate the PI3 kinase-mTOR signaling pathway. Interacts with VAV3; constitutive interaction mediating VAV3 phosphorylation. Interacts with PTPN6 (via SH2 1 domain); the interaction is direct and promotes ROS1 dephosphorylation. Phosphorylated. Probably autophosphorylates. Phosphorylation at Tyr-2267 and/or Tyr-2327 recruits PTPN11. Phosphorylation at Tyr-2267 is required for the interaction with PTPN6 that mediates ROS1 dephosphorylation. Phosphorylation at Tyr-2267 stimulates the kinase activity and the activation of the ERK1 signaling cascade. Expressed by epithelial cells of the caput epididymis (at protein level).

The protein localises to the cell membrane. It carries out the reaction L-tyrosyl-[protein] + ATP = O-phospho-L-tyrosyl-[protein] + ADP + H(+). Its activity is regulated as follows. Inhibited by dephosphorylation by PTPN6. In terms of biological role, receptor tyrosine kinase (RTK) that plays a role in epithelial cell differentiation and regionalization of the proximal epididymal epithelium. NELL2 is an endogenous ligand for ROS1. Upon endogenous stimulation by NELL2, ROS1 activates the intracellular signaling pathway and triggers epididymal epithelial differentiation and subsequent sperm maturation. May activate several downstream signaling pathways related to cell differentiation, proliferation, growth and survival including the PI3 kinase-mTOR signaling pathway. Mediates the phosphorylation of PTPN11, an activator of this pathway. May also phosphorylate and activate the transcription factor STAT3 to control anchorage-independent cell growth. Mediates the phosphorylation and the activation of VAV3, a guanine nucleotide exchange factor regulating cell morphology. May activate other downstream signaling proteins including AKT1, MAPK1, MAPK3, IRS1, and PLCG2. This Mus musculus (Mouse) protein is Proto-oncogene tyrosine-protein kinase ROS (Ros1).